The chain runs to 946 residues: Bifunctional glutamine synthetase adenylyltransferase/adenylyl-removing enzyme (946 aa).

Residues 1–440 (MKPLSSPLQQ…VFNELIGDDE (440 aa)) are adenylyl removase. Positions 449-946 (SEQWRELWQD…ASWQKWLVEE (498 aa)) are adenylyl transferase.

It belongs to the GlnE family. The cofactor is Mg(2+).

It carries out the reaction [glutamine synthetase]-O(4)-(5'-adenylyl)-L-tyrosine + phosphate = [glutamine synthetase]-L-tyrosine + ADP. The enzyme catalyses [glutamine synthetase]-L-tyrosine + ATP = [glutamine synthetase]-O(4)-(5'-adenylyl)-L-tyrosine + diphosphate. Involved in the regulation of glutamine synthetase GlnA, a key enzyme in the process to assimilate ammonia. When cellular nitrogen levels are high, the C-terminal adenylyl transferase (AT) inactivates GlnA by covalent transfer of an adenylyl group from ATP to specific tyrosine residue of GlnA, thus reducing its activity. Conversely, when nitrogen levels are low, the N-terminal adenylyl removase (AR) activates GlnA by removing the adenylyl group by phosphorolysis, increasing its activity. The regulatory region of GlnE binds the signal transduction protein PII (GlnB) which indicates the nitrogen status of the cell. The protein is Bifunctional glutamine synthetase adenylyltransferase/adenylyl-removing enzyme of Shigella flexneri.